The sequence spans 521 residues: NADH-quinone oxidoreductase subunit N (521 aa).

The next 14 membrane-spanning stretches (helical) occupy residues 15 to 35, 43 to 63, 98 to 118, 128 to 148, 150 to 170, 185 to 205, 227 to 247, 261 to 281, 303 to 323, 331 to 351, 363 to 383, 406 to 426, 442 to 462, and 485 to 505; these read LAPELILAAMFLILIVTDLIL, IIGWLSLAGLLLSLAAVIWRM, LLKIIFLIGTSLVVLLGLGST, AEFYYLLLPAAAGAMIMASSG, LVTLYIGLELLSITTYVLVGL, VVTGGIASAFVLFGMSYLYGV, ALVYVGFFFLIAGFGIKIAAA, PTPVSAFLAVIAKGAALAAVF, VFFALLVIAAAAMIAGTVSAL, LLALSGVANAGYLLVPIAISV, VFYLVAYLLMNVGAFAVVTVI, AAAMLIFILSFSGLPVTAGFF, WLVAIMVVSTVISYYFYFGII, and TVIWICAAATVALGVLPGPLM.

Belongs to the complex I subunit 2 family. In terms of assembly, NDH-1 is composed of 14 different subunits. Subunits NuoA, H, J, K, L, M, N constitute the membrane sector of the complex.

It is found in the cell membrane. It catalyses the reaction a quinone + NADH + 5 H(+)(in) = a quinol + NAD(+) + 4 H(+)(out). In terms of biological role, NDH-1 shuttles electrons from NADH, via FMN and iron-sulfur (Fe-S) centers, to quinones in the respiratory chain. The immediate electron acceptor for the enzyme in this species is believed to be a menaquinone. Couples the redox reaction to proton translocation (for every two electrons transferred, four hydrogen ions are translocated across the cytoplasmic membrane), and thus conserves the redox energy in a proton gradient. This Paenibacillus sp. (strain JDR-2) protein is NADH-quinone oxidoreductase subunit N.